The following is a 101-amino-acid chain: Large ribosomal subunit protein uL23 (101 aa).

Belongs to the universal ribosomal protein uL23 family. In terms of assembly, part of the 50S ribosomal subunit. Contacts protein L29, and trigger factor when it is bound to the ribosome.

In terms of biological role, one of the early assembly proteins it binds 23S rRNA. One of the proteins that surrounds the polypeptide exit tunnel on the outside of the ribosome. Forms the main docking site for trigger factor binding to the ribosome. The chain is Large ribosomal subunit protein uL23 from Azoarcus sp. (strain BH72).